We begin with the raw amino-acid sequence, 69 residues long: Large ribosomal subunit protein eL38 (69 aa).

It belongs to the eukaryotic ribosomal protein eL38 family.

The protein is Large ribosomal subunit protein eL38 (RPL38) of Solanum lycopersicum (Tomato).